The chain runs to 196 residues: Probable malonic semialdehyde reductase RutE (196 aa).

This sequence belongs to the nitroreductase family. HadB/RutE subfamily. The cofactor is FMN.

It catalyses the reaction 3-hydroxypropanoate + NADP(+) = 3-oxopropanoate + NADPH + H(+). Functionally, may reduce toxic product malonic semialdehyde to 3-hydroxypropionic acid, which is excreted. The sequence is that of Probable malonic semialdehyde reductase RutE from Escherichia coli O45:K1 (strain S88 / ExPEC).